We begin with the raw amino-acid sequence, 268 residues long: Fatty acid elongase sre1 (268 aa).

7 consecutive transmembrane segments (helical) span residues 31-51 (VFPF…QAIM), 62-82 (FSII…SGVM), 110-130 (IGFW…DTVI), 137-157 (PIIF…WQWL), 161-181 (WLVG…LMYY), 198-218 (ITKA…YWFV), and 227-247 (APLS…ILFG).

Belongs to the ELO family.

It is found in the membrane. It catalyses the reaction a very-long-chain acyl-CoA + malonyl-CoA + H(+) = a very-long-chain 3-oxoacyl-CoA + CO2 + CoA. Functionally, could be implicated in synthesis of very long chain fatty acids. The chain is Fatty acid elongase sre1 (sre1) from Dictyostelium discoideum (Social amoeba).